The primary structure comprises 35 residues: U1-theraphotoxin-Hhn1a (35 aa).

3 cysteine pairs are disulfide-bonded: Cys-2–Cys-16, Cys-9–Cys-21, and Cys-15–Cys-28.

Belongs to the neurotoxin 10 (Hwtx-1) family. 24 (Hwtx-6) subfamily. Expressed by the venom gland.

The protein localises to the secreted. Its function is as follows. Gating-modifier toxin that dose-dependently inhibits inactivation of voltage-gated sodium channels and reduces the peak of sodium current in cockroach DUM neurons. In vivo, reversibly paralyzes cockroaches for several hours, paralyzes rat after intracerebroventricular injection and blocks the neuromuscular transmission of the isolated rat phrenic nerve-diaphragm preparation. In Cyriopagopus hainanus (Chinese bird spider), this protein is U1-theraphotoxin-Hhn1a.